A 709-amino-acid chain; its full sequence is Phosphoribosylformylglycinamidine synthase subunit PurL (709 aa).

His-36 is a catalytic residue. ATP-binding residues include Tyr-39 and Lys-80. Glu-82 is a binding site for Mg(2+). Substrate is bound by residues 83 to 86 (SHNH) and Arg-105. Residue His-84 is the Proton acceptor of the active site. Mg(2+) is bound at residue Asp-106. Residue Gln-226 participates in substrate binding. Asp-252 provides a ligand contact to Mg(2+). Residue 294 to 296 (ETQ) coordinates substrate. Residues Asp-470 and Gly-507 each coordinate ATP. Ser-510 is a binding site for substrate.

The protein belongs to the FGAMS family. Monomer. Part of the FGAM synthase complex composed of 1 PurL, 1 PurQ and 2 PurS subunits.

Its subcellular location is the cytoplasm. The catalysed reaction is N(2)-formyl-N(1)-(5-phospho-beta-D-ribosyl)glycinamide + L-glutamine + ATP + H2O = 2-formamido-N(1)-(5-O-phospho-beta-D-ribosyl)acetamidine + L-glutamate + ADP + phosphate + H(+). It participates in purine metabolism; IMP biosynthesis via de novo pathway; 5-amino-1-(5-phospho-D-ribosyl)imidazole from N(2)-formyl-N(1)-(5-phospho-D-ribosyl)glycinamide: step 1/2. Functionally, part of the phosphoribosylformylglycinamidine synthase complex involved in the purines biosynthetic pathway. Catalyzes the ATP-dependent conversion of formylglycinamide ribonucleotide (FGAR) and glutamine to yield formylglycinamidine ribonucleotide (FGAM) and glutamate. The FGAM synthase complex is composed of three subunits. PurQ produces an ammonia molecule by converting glutamine to glutamate. PurL transfers the ammonia molecule to FGAR to form FGAM in an ATP-dependent manner. PurS interacts with PurQ and PurL and is thought to assist in the transfer of the ammonia molecule from PurQ to PurL. The chain is Phosphoribosylformylglycinamidine synthase subunit PurL from Saccharolobus islandicus (strain M.14.25 / Kamchatka #1) (Sulfolobus islandicus).